Reading from the N-terminus, the 585-residue chain is Cytoplasmic polyadenylation element-binding protein 1 (585 aa).

A disordered region spans residues 1–32 (MQHQLKACGDVKTSSRAQQNHRRSTAASAKRS). 2 RRM domains span residues 251–356 (RKVF…PWRL) and 373–444 (RTVF…HAET). Residues 513-533 (DQTRILPRPPHHPAAHHSHQR) are disordered. A compositionally biased stretch (basic residues) spans 521 to 532 (PPHHPAAHHSHQ).

As to quaternary structure, interacts with fbf-1.

Cytoplasmic polyadenylation element binding protein that binds to and regulates the translation of specific mRNAs. Essential for progression through meiosis. Involved in spermatogenesis. The polypeptide is Cytoplasmic polyadenylation element-binding protein 1 (cpb-1) (Caenorhabditis briggsae).